The primary structure comprises 251 residues: Ubiquinone biosynthesis O-methyltransferase (251 aa).

The S-adenosyl-L-methionine site is built by arginine 36, glycine 61, aspartate 82, and isoleucine 124.

The protein belongs to the methyltransferase superfamily. UbiG/COQ3 family.

It catalyses the reaction a 3-demethylubiquinol + S-adenosyl-L-methionine = a ubiquinol + S-adenosyl-L-homocysteine + H(+). The catalysed reaction is a 3-(all-trans-polyprenyl)benzene-1,2-diol + S-adenosyl-L-methionine = a 2-methoxy-6-(all-trans-polyprenyl)phenol + S-adenosyl-L-homocysteine + H(+). Its pathway is cofactor biosynthesis; ubiquinone biosynthesis. Its function is as follows. O-methyltransferase that catalyzes the 2 O-methylation steps in the ubiquinone biosynthetic pathway. This is Ubiquinone biosynthesis O-methyltransferase from Rickettsia akari (strain Hartford).